The sequence spans 480 residues: Probable WRKY transcription factor 61 (480 aa).

The tract at residues 30–108 (NQLMAKHNEP…RNYDDNEKSS (79 aa)) is disordered. Composition is skewed to basic and acidic residues over residues 57 to 66 (REKVNEREEL) and 84 to 106 (NKEE…DNEK). The WRKY DNA-binding region spans 185-251 (CETPTMNDGC…YEGTHNHPLP (67 aa)).

Its subcellular location is the nucleus. Functionally, transcription factor. Interacts specifically with the W box (5'-(T)TGAC[CT]-3'), a frequently occurring elicitor-responsive cis-acting element. The polypeptide is Probable WRKY transcription factor 61 (WRKY61) (Arabidopsis thaliana (Mouse-ear cress)).